The chain runs to 154 residues: MPQLATICYIDNGKELLMLHRNKKPNDVHEGKWIGVGGKLERGETPQECAVREILEETGLKAKPVLKGVITFPEFTPDLDWYTYVFKVTEFEGDLIDCNEGMLEWVPYDEVLSKPTWEGDHTFVEWLLEDKPFFSAKFVYDGDKLLDTQVDFYE.

Residues 1-129 enclose the Nudix hydrolase domain; sequence MPQLATICYI…DHTFVEWLLE (129 aa). Mg(2+)-binding residues include Gly-38, Glu-53, Glu-56, and Glu-57. Positions 38 to 59 match the Nudix box motif; it reads GKLERGETPQECAVREILEETG.

It belongs to the Nudix hydrolase family. In terms of assembly, homotrimer. Mg(2+) serves as cofactor.

It carries out the reaction 8-oxo-dGTP + H2O = 8-oxo-dGMP + diphosphate + H(+). Its function is as follows. Involved in the DNA repair system to avoid A.T to G.C transversions. Degrades 8-oxo-dGTP to the monophosphate, but is also active on all of the nucleoside triphosphates. In Streptococcus pneumoniae (strain ATCC BAA-255 / R6), this protein is 8-oxo-dGTP diphosphatase (mutX).